The chain runs to 93 residues: MIKENTYFEGGVKSLAFNQSGADVSVGVMAAGEYTFGTAAPEKMTVVKGALIVKRVGDDDWTTFQSGESFDVAGDSSFDLQVKEATAYLCEYL.

Belongs to the nucleoside phosphorylase PpnP family.

The enzyme catalyses a purine D-ribonucleoside + phosphate = a purine nucleobase + alpha-D-ribose 1-phosphate. It carries out the reaction adenosine + phosphate = alpha-D-ribose 1-phosphate + adenine. It catalyses the reaction cytidine + phosphate = cytosine + alpha-D-ribose 1-phosphate. The catalysed reaction is guanosine + phosphate = alpha-D-ribose 1-phosphate + guanine. The enzyme catalyses inosine + phosphate = alpha-D-ribose 1-phosphate + hypoxanthine. It carries out the reaction thymidine + phosphate = 2-deoxy-alpha-D-ribose 1-phosphate + thymine. It catalyses the reaction uridine + phosphate = alpha-D-ribose 1-phosphate + uracil. The catalysed reaction is xanthosine + phosphate = alpha-D-ribose 1-phosphate + xanthine. Its function is as follows. Catalyzes the phosphorolysis of diverse nucleosides, yielding D-ribose 1-phosphate and the respective free bases. Can use uridine, adenosine, guanosine, cytidine, thymidine, inosine and xanthosine as substrates. Also catalyzes the reverse reactions. In Vibrio atlanticus (strain LGP32) (Vibrio splendidus (strain Mel32)), this protein is Pyrimidine/purine nucleoside phosphorylase.